Reading from the N-terminus, the 388-residue chain is Protein DJ-1 homolog D (388 aa).

PfpI endopeptidase domains follow at residues 5 to 190 and 198 to 383; these read RTVL…KALG and KRIL…ALLG. Catalysis depends on Cys120, which acts as the Nucleophile. Cys120 is subject to Cysteine sulfenic acid (-SOH). The active site involves His121. The active-site Nucleophile is the Cys313. Cys313 bears the Cysteine sulfinic acid (-SO2H) mark. The active site involves His314.

It belongs to the peptidase C56 family. In terms of assembly, homotrimer. In terms of processing, cys-120 and Cys-313 are oxidized to sulfinic acid.

The catalysed reaction is (R)-S-lactoylglutathione = methylglyoxal + glutathione. Possesses glyoxalase I activity. Catalyzes the conversion of hemimercaptal, formed from methylglyoxal and glutathione, to S-lactoylglutathione. May be involved in oxidative stress response. In Arabidopsis thaliana (Mouse-ear cress), this protein is Protein DJ-1 homolog D (DJ1D).